We begin with the raw amino-acid sequence, 222 residues long: 2-C-methyl-D-erythritol 4-phosphate cytidylyltransferase (222 aa).

This sequence belongs to the IspD/TarI cytidylyltransferase family. IspD subfamily.

The catalysed reaction is 2-C-methyl-D-erythritol 4-phosphate + CTP + H(+) = 4-CDP-2-C-methyl-D-erythritol + diphosphate. The protein operates within isoprenoid biosynthesis; isopentenyl diphosphate biosynthesis via DXP pathway; isopentenyl diphosphate from 1-deoxy-D-xylulose 5-phosphate: step 2/6. Functionally, catalyzes the formation of 4-diphosphocytidyl-2-C-methyl-D-erythritol from CTP and 2-C-methyl-D-erythritol 4-phosphate (MEP). The chain is 2-C-methyl-D-erythritol 4-phosphate cytidylyltransferase from Thermotoga neapolitana (strain ATCC 49049 / DSM 4359 / NBRC 107923 / NS-E).